Here is a 161-residue protein sequence, read N- to C-terminus: Large ribosomal subunit protein uL30m (161 aa).

The transit peptide at 1–34 (MAGILRLVVQWPPGRLQTVTKGVESLICTDWIRH) directs the protein to the mitochondrion.

The protein belongs to the universal ribosomal protein uL30 family. As to quaternary structure, component of the mitochondrial large ribosomal subunit (mt-LSU). Mature mammalian 55S mitochondrial ribosomes consist of a small (28S) and a large (39S) subunit. The 28S small subunit contains a 12S ribosomal RNA (12S mt-rRNA) and 30 different proteins. The 39S large subunit contains a 16S rRNA (16S mt-rRNA), a copy of mitochondrial valine transfer RNA (mt-tRNA(Val)), which plays an integral structural role, and 52 different proteins.

The protein localises to the mitochondrion. The protein is Large ribosomal subunit protein uL30m (MRPL30) of Homo sapiens (Human).